Consider the following 1531-residue polypeptide: DNA topoisomerase 2-alpha (1531 aa).

The residue at position 1 (Met-1) is an N-acetylmethionine. The residue at position 4 (Ser-4) is a Phosphoserine. Lys-17 is covalently cross-linked (Glycyl lysine isopeptide (Lys-Gly) (interchain with G-Cter in SUMO2)). ATP-binding positions include Asn-91, Asn-120, and 148–150; that span reads SSN. Glycyl lysine isopeptide (Lys-Gly) (interchain with G-Cter in SUMO2) cross-links involve residues Lys-156 and Lys-157. 161-168 contributes to the ATP binding site; sequence GRNGYGAK. Residue Lys-261 forms a Glycyl lysine isopeptide (Lys-Gly) (interchain with G-Cter in SUMO2) linkage. A Phosphothreonine modification is found at Thr-282. Positions 342 to 344 are interaction with DNA; that stretch reads KKK. Residue Lys-352 forms a Glycyl lysine isopeptide (Lys-Gly) (interchain with G-Cter in SUMO2) linkage. Residue 376–378 participates in ATP binding; it reads QTK. Residues Lys-386, Lys-397, Lys-416, Lys-418, Lys-425, and Lys-440 each participate in a glycyl lysine isopeptide (Lys-Gly) (interchain with G-Cter in SUMO2) cross-link. The Toprim domain occupies 455–572; it reads CTLILTEGDS…SLLRHRFLEE (118 aa). Glu-461 is a Mg(2+) binding site. Residues Lys-466, Lys-480, and Lys-529 each participate in a glycyl lysine isopeptide (Lys-Gly) (interchain with G-Cter in SUMO2) cross-link. Asp-541 and Asp-543 together coordinate Mg(2+). Glycyl lysine isopeptide (Lys-Gly) (interchain with G-Cter in SUMO2) cross-links involve residues Lys-584, Lys-599, Lys-614, Lys-622, Lys-625, Lys-632, Lys-639, Lys-655, Lys-662, and Lys-676. Residues 715–1171 enclose the Topo IIA-type catalytic domain; the sequence is IPSMVDGLKP…SPSDLWKEDL (457 aa). Residue Tyr-805 is the O-(5'-phospho-DNA)-tyrosine intermediate of the active site. The segment at 990–999 is interaction with DNA; the sequence is KLQTSLTCNS. Residues 1018 to 1028 carry the Nuclear export signal motif; sequence ILRDFFELRLK. Lys-1075 participates in a covalent cross-link: Glycyl lysine isopeptide (Lys-Gly) (interchain with G-Cter in SUMO2). Disordered stretches follow at residues 1090 to 1123 and 1184 to 1531; these read WKEA…DSGP and KEKQ…DDLF. A compositionally biased stretch (acidic residues) spans 1099–1108; it reads DEEENEESDN. Position 1106 is a phosphoserine; by CK1 (Ser-1106). Residues Lys-1114, Lys-1196, and Lys-1204 each participate in a glycyl lysine isopeptide (Lys-Gly) (interchain with G-Cter in SUMO2) cross-link. Thr-1205 is modified (phosphothreonine). Ser-1213 is subject to Phosphoserine. Residue Lys-1228 forms a Glycyl lysine isopeptide (Lys-Gly) (interchain with G-Cter in SUMO2) linkage. A Glycyl lysine isopeptide (Lys-Gly) (interchain with G-Cter in SUMO1); alternate cross-link involves residue Lys-1240. A Glycyl lysine isopeptide (Lys-Gly) (interchain with G-Cter in SUMO2); alternate cross-link involves residue Lys-1240. A Phosphothreonine modification is found at Thr-1244. Position 1247 is a phosphoserine (Ser-1247). The span at 1256-1272 shows a compositional bias: basic and acidic residues; that stretch reads EGLKQRLEKKQKREPGT. Residues Lys-1259, Lys-1276, Lys-1283, and Lys-1286 each participate in a glycyl lysine isopeptide (Lys-Gly) (interchain with G-Cter in SUMO2) cross-link. Residues Ser-1295, Ser-1297, Ser-1299, and Ser-1302 each carry the phosphoserine modification. Thr-1327 is subject to Phosphothreonine. Acidic residues predominate over residues 1330-1349; it reads LDSDEDFSDFDEKTDDEDFV. Residues Ser-1332 and Ser-1337 each carry the phosphoserine modification. Thr-1343 bears the Phosphothreonine; by PLK3 mark. Residues Ser-1351 and Ser-1354 each carry the phosphoserine modification. Glycyl lysine isopeptide (Lys-Gly) (interchain with G-Cter in SUMO2) cross-links involve residues Lys-1363, Lys-1367, and Lys-1373. Phosphoserine occurs at positions 1374 and 1377. Lys-1385 is covalently cross-linked (Glycyl lysine isopeptide (Lys-Gly) (interchain with G-Cter in SUMO2)). Phosphoserine is present on residues Ser-1387, Ser-1391, Ser-1392, and Ser-1393. Residues 1406 to 1431 are compositionally biased toward low complexity; sequence TNPVPKKNVTVKKTAAKSQSSTSTTG. A Glycyl lysine isopeptide (Lys-Gly) (interchain with G-Cter in SUMO2); alternate cross-link involves residue Lys-1422. Lys-1422 carries the N6-acetyllysine; alternate modification. The interaction with PLSCR1 stretch occupies residues 1433-1439; that stretch reads KKRAAPK. A Glycyl lysine isopeptide (Lys-Gly) (interchain with G-Cter in SUMO2); alternate cross-link involves residue Lys-1442. Lys-1442 is modified (N6-acetyllysine; alternate). The residue at position 1449 (Ser-1449) is a Phosphoserine. Residues Lys-1454 and Lys-1459 each participate in a glycyl lysine isopeptide (Lys-Gly) (interchain with G-Cter in SUMO2) cross-link. Ser-1469 carries the phosphoserine; by CK2 modification. Thr-1470 bears the Phosphothreonine mark. Phosphoserine occurs at positions 1471, 1474, and 1476. Glycyl lysine isopeptide (Lys-Gly) (interchain with G-Cter in SUMO2) cross-links involve residues Lys-1484 and Lys-1492. A compositionally biased stretch (basic and acidic residues) spans 1491–1502; that stretch reads SKGESDDFHMDF. 3 positions are modified to phosphoserine: Ser-1495, Ser-1504, and Ser-1525.

It belongs to the type II topoisomerase family. In terms of assembly, homodimer. Interacts with COPS5. Interacts with RECQL5; this stimulates DNA decatenation. Interacts with SETMAR; stimulates the topoisomerase activity. Interacts with DHX9; this interaction occurs in a E2 enzyme UBE2I- and RNA-dependent manner, negatively regulates DHX9-mediated double-stranded DNA and RNA duplex helicase activity and stimulates TOP2A-mediated supercoiled DNA relaxation activity. Interacts with HNRNPU (via C-terminus); this interaction protects the topoisomerase TOP2A from degradation and positively regulates the relaxation of supercoiled DNA in a RNA-dependent manner. Interacts with MCM3AP isoform GANP. Interacts with ERCC6. Interacts with PLSCR1. Interacts with GCNA; this interaction allows the resolution of topoisomerase II (TOP2A) DNA-protein cross-links. Interacts with POL1RA/RPA1 (via dock II) and UBTF in the context of Pol I complex; may assist Pol I transcription initiation by releasing supercoils occurring during DNA unwinding. Interacts with TPRN; TPRN interacts with a number of DNA damage response proteins, is recruited to sites of DNA damage and may play a role in DNA damage repair. It depends on Mg(2+) as a cofactor. Mn(2+) is required as a cofactor. Ca(2+) serves as cofactor. In terms of processing, phosphorylation has no effect on catalytic activity. However, phosphorylation at Ser-1106 by CSNK1D/CK1 promotes DNA cleavable complex formation. Post-translationally, (Microbial infection) Deubiquitinated by Epstein-Barr virus BPLF1; leading to stabilized SUMOylated TOP2A trapped in cleavage complexes, which halts the DNA damage response to TOP2A-induced double-strand DNA breaks. SUMOylated. In terms of tissue distribution, expressed in the tonsil, spleen, lymph node, thymus, skin, pancreas, testis, colon, kidney, liver, brain and lung. Also found in high-grade lymphomas, squamous cell lung tumors and seminomas.

The protein resides in the cytoplasm. It is found in the nucleus. It localises to the nucleoplasm. The protein localises to the nucleolus. The enzyme catalyses ATP-dependent breakage, passage and rejoining of double-stranded DNA.. Its activity is regulated as follows. Specifically inhibited by the intercalating agent amsacrine. In terms of biological role, key decatenating enzyme that alters DNA topology by binding to two double-stranded DNA molecules, generating a double-stranded break in one of the strands, passing the intact strand through the broken strand, and religating the broken strand. May play a role in regulating the period length of BMAL1 transcriptional oscillation. The chain is DNA topoisomerase 2-alpha (TOP2A) from Homo sapiens (Human).